The sequence spans 178 residues: Ribosomal RNA small subunit methyltransferase G (178 aa).

S-adenosyl-L-methionine-binding positions include G54, L59, 105–106 (LE), and R120.

It belongs to the methyltransferase superfamily. RNA methyltransferase RsmG family.

The protein localises to the cytoplasm. The catalysed reaction is guanosine(527) in 16S rRNA + S-adenosyl-L-methionine = N(7)-methylguanosine(527) in 16S rRNA + S-adenosyl-L-homocysteine. Its function is as follows. Specifically methylates the N7 position of guanine in position 527 of 16S rRNA. This is Ribosomal RNA small subunit methyltransferase G from Helicobacter pylori (strain HPAG1).